Here is a 475-residue protein sequence, read N- to C-terminus: ATP synthase subunit beta, chloroplastic (475 aa).

156–163 (GGAGVGKT) lines the ATP pocket.

The protein belongs to the ATPase alpha/beta chains family. As to quaternary structure, F-type ATPases have 2 components, CF(1) - the catalytic core - and CF(0) - the membrane proton channel. CF(1) has five subunits: alpha(3), beta(3), gamma(1), delta(1), epsilon(1). CF(0) has four main subunits: a(1), b(1), b'(1) and c(9-12).

It localises to the plastid. Its subcellular location is the chloroplast thylakoid membrane. It catalyses the reaction ATP + H2O + 4 H(+)(in) = ADP + phosphate + 5 H(+)(out). Its function is as follows. Produces ATP from ADP in the presence of a proton gradient across the membrane. The catalytic sites are hosted primarily by the beta subunits. The sequence is that of ATP synthase subunit beta, chloroplastic from Phaeodactylum tricornutum (strain CCAP 1055/1).